The chain runs to 204 residues: Large ribosomal subunit protein uL4 (204 aa).

Residues 53 to 73 (AFVSGGGKKPWRQKGRGGARA) form a disordered region.

It belongs to the universal ribosomal protein uL4 family. Part of the 50S ribosomal subunit.

Functionally, one of the primary rRNA binding proteins, this protein initially binds near the 5'-end of the 23S rRNA. It is important during the early stages of 50S assembly. It makes multiple contacts with different domains of the 23S rRNA in the assembled 50S subunit and ribosome. In terms of biological role, forms part of the polypeptide exit tunnel. The polypeptide is Large ribosomal subunit protein uL4 (Campylobacter concisus (strain 13826)).